Reading from the N-terminus, the 586-residue chain is 2-succinyl-5-enolpyruvyl-6-hydroxy-3-cyclohexene-1-carboxylate synthase (586 aa).

It belongs to the TPP enzyme family. MenD subfamily. In terms of assembly, homodimer. Requires Mg(2+) as cofactor. Mn(2+) serves as cofactor. The cofactor is thiamine diphosphate.

The enzyme catalyses isochorismate + 2-oxoglutarate + H(+) = 5-enolpyruvoyl-6-hydroxy-2-succinyl-cyclohex-3-ene-1-carboxylate + CO2. Its pathway is quinol/quinone metabolism; 1,4-dihydroxy-2-naphthoate biosynthesis; 1,4-dihydroxy-2-naphthoate from chorismate: step 2/7. The protein operates within cofactor biosynthesis; phylloquinone biosynthesis. Its function is as follows. Catalyzes the thiamine diphosphate-dependent decarboxylation of 2-oxoglutarate and the subsequent addition of the resulting succinic semialdehyde-thiamine pyrophosphate anion to isochorismate to yield 2-succinyl-5-enolpyruvyl-6-hydroxy-3-cyclohexene-1-carboxylate (SEPHCHC). The sequence is that of 2-succinyl-5-enolpyruvyl-6-hydroxy-3-cyclohexene-1-carboxylate synthase from Acaryochloris marina (strain MBIC 11017).